Here is a 658-residue protein sequence, read N- to C-terminus: Carnitine O-palmitoyltransferase 2, mitochondrial (658 aa).

The N-terminal 25 residues, 1–25 (MMPRLLLRDWPRCPSLVLGAPSRPL), are a transit peptide targeting the mitochondrion. The Mitochondrial matrix portion of the chain corresponds to 26–178 (SAVSGPAEYL…GLLEPEVFHL (153 aa)). Residue Lys-69 is modified to N6-succinyllysine. Residue Lys-79 is modified to N6-acetyllysine. Lys-85 is modified (N6-succinyllysine). The segment at residues 179-208 (NPARSDTDAFKRLIRFVPSSLSWYGAYLVN) is an intramembrane region (note=Mitochondrial inner membrane). The Mitochondrial matrix portion of the chain corresponds to 209–658 (AYPLDMSQYF…DALEGKAIKT (450 aa)). The residue at position 239 (Lys-239) is an N6-acetyllysine; alternate. Lys-239 carries the post-translational modification N6-succinyllysine; alternate. Residue Lys-305 is modified to N6-acetyllysine. The active-site Proton acceptor is His-372. The residue at position 418 (Lys-418) is an N6-acetyllysine; alternate. N6-succinyllysine; alternate is present on Lys-418. Residues Lys-424 and Lys-439 each carry the N6-succinyllysine modification. 452 to 464 (GKEFLKKKKLSPD) provides a ligand contact to CoA. (R)-carnitine-binding residues include Tyr-486, Ser-488, and Thr-499. N6-acetyllysine; alternate is present on residues Lys-510 and Lys-544. N6-succinyllysine; alternate is present on residues Lys-510 and Lys-544.

The protein belongs to the carnitine/choline acetyltransferase family.

It is found in the mitochondrion inner membrane. The enzyme catalyses (R)-carnitine + hexadecanoyl-CoA = O-hexadecanoyl-(R)-carnitine + CoA. It carries out the reaction octanoyl-CoA + (R)-carnitine = O-octanoyl-(R)-carnitine + CoA. It catalyses the reaction decanoyl-CoA + (R)-carnitine = O-decanoyl-(R)-carnitine + CoA. The catalysed reaction is dodecanoyl-CoA + (R)-carnitine = O-dodecanoyl-R-carnitine + CoA. The enzyme catalyses tetradecanoyl-CoA + (R)-carnitine = O-tetradecanoyl-(R)-carnitine + CoA. It carries out the reaction (R)-carnitine + octadecanoyl-CoA = O-octadecanoyl-(R)-carnitine + CoA. It catalyses the reaction eicosanoyl-CoA + (R)-carnitine = O-eicosanoyl-(R)-carnitine + CoA. The catalysed reaction is (9Z)-tetradecenoyl-CoA + (R)-carnitine = O-(9Z)-tetradecenoyl-(R)-carnitine + CoA. The enzyme catalyses (5Z)-tetradecenoyl-CoA + (R)-carnitine = O-(5Z)-tetradecenoyl-(R)-carnitine + CoA. It carries out the reaction (R)-carnitine + (9Z)-octadecenoyl-CoA = O-(9Z)-octadecenoyl-(R)-carnitine + CoA. It catalyses the reaction 4,8-dimethylnonanoyl-CoA + (R)-carnitine = O-4,8-dimethylnonanoyl-(R)-carnitine + CoA. It participates in lipid metabolism; fatty acid beta-oxidation. In terms of biological role, involved in the intramitochondrial synthesis of acylcarnitines from accumulated acyl-CoA metabolites. Reconverts acylcarnitines back into the respective acyl-CoA esters that can then undergo beta-oxidation, an essential step for the mitochondrial uptake of long-chain fatty acids and their subsequent beta-oxidation in the mitochondrion. Active with medium (C8-C12) and long-chain (C14-C18) acyl-CoA esters. The polypeptide is Carnitine O-palmitoyltransferase 2, mitochondrial (Mus musculus (Mouse)).